The chain runs to 565 residues: Heme/hemopexin transporter protein HuxB (565 aa).

The signal sequence occupies residues 1–26 (MKMRPRYSVIASAVSLGFVLSKSVMA). In terms of domain architecture, POTRA spans 73 to 150 (FPLTQVQILD…GTVKILLLKG (78 aa)).

This sequence belongs to the TPS (TC 1.B.20) family.

The protein localises to the cell outer membrane. Its function is as follows. Likely functions in the release of soluble HxuA from the cell. In terms of biological role, probable member of a two partner secretion pathway (TPS) in which it mediates the secretion of HuxA. In Haemophilus influenzae, this protein is Heme/hemopexin transporter protein HuxB (hxuB).